The primary structure comprises 125 residues: Cu-Zn superoxide dismutase-like protein (125 aa).

Residues Cys52 and Cys102 are joined by a disulfide bond.

This sequence belongs to the Cu-Zn superoxide dismutase family.

The protein resides in the host cytoplasm. Virion protein with no enzymatic activity. This is Cu-Zn superoxide dismutase-like protein from Camelpox virus (strain M-96).